An 876-amino-acid chain; its full sequence is Probable LRR receptor-like protein kinase At1g51890 (876 aa).

Residues 1–19 (MRFLSFLIFVFAVLGLVQA) form the signal peptide. Over 20–500 (QDQSGFISLD…TGKNSTNVVA (481 aa)) the chain is Extracellular. 13 N-linked (GlcNAc...) asparagine glycosylation sites follow: N45, N90, N138, N177, N251, N259, N284, N290, N327, N335, N397, N412, and N417. LRR repeat units lie at residues 407–430 (QIIS…SKLT), 431–453 (HLRE…FSDM), and 455–476 (NLTL…ETLQ). N-linked (GlcNAc...) asparagine glycosylation is found at N455, N460, N468, N481, and N494. A helical membrane pass occupies residues 501–521 (IAASVASVFAVLVILAIVFVV). The Cytoplasmic portion of the chain corresponds to 522–872 (IRKKQRTNEA…FSPSSASDFS (351 aa)). T561 is subject to Phosphothreonine. The Protein kinase domain occupies 570–842 (KNFERVLGKG…HVVMELNECL (273 aa)). ATP-binding positions include 576–584 (LGKGGFGTV) and K597. Y642 carries the post-translational modification Phosphotyrosine. Catalysis depends on D694, which acts as the Proton acceptor. T729 and T734 each carry phosphothreonine. Residue Y742 is modified to Phosphotyrosine.

It belongs to the protein kinase superfamily. Ser/Thr protein kinase family.

The protein resides in the cell membrane. The catalysed reaction is L-seryl-[protein] + ATP = O-phospho-L-seryl-[protein] + ADP + H(+). The enzyme catalyses L-threonyl-[protein] + ATP = O-phospho-L-threonyl-[protein] + ADP + H(+). This Arabidopsis thaliana (Mouse-ear cress) protein is Probable LRR receptor-like protein kinase At1g51890.